We begin with the raw amino-acid sequence, 283 residues long: Bifunctional protein FolD (283 aa).

166-168 (GAS) provides a ligand contact to NADP(+).

It belongs to the tetrahydrofolate dehydrogenase/cyclohydrolase family. In terms of assembly, homodimer.

The enzyme catalyses (6R)-5,10-methylene-5,6,7,8-tetrahydrofolate + NADP(+) = (6R)-5,10-methenyltetrahydrofolate + NADPH. It catalyses the reaction (6R)-5,10-methenyltetrahydrofolate + H2O = (6R)-10-formyltetrahydrofolate + H(+). It participates in one-carbon metabolism; tetrahydrofolate interconversion. Catalyzes the oxidation of 5,10-methylenetetrahydrofolate to 5,10-methenyltetrahydrofolate and then the hydrolysis of 5,10-methenyltetrahydrofolate to 10-formyltetrahydrofolate. In Coxiella burnetii (strain CbuK_Q154) (Coxiella burnetii (strain Q154)), this protein is Bifunctional protein FolD.